A 596-amino-acid polypeptide reads, in one-letter code: Transcription factor EGL1 (596 aa).

Residues 401-450 (EETGNHALSEKKRREKLNERFMTLRSIIPSISKIDKVSILDDTIEYLQDL) form the bHLH domain.

Efficient DNA binding requires dimerization with another bHLH protein. Homodimer and heterodimer with GL3. Interacts with CPC, MYB0/GL1, MYB5, MYB23, MYB113, MYB114, MYB75/PAP1, MYB90/PAP2, TT2, TRY, TTG1 and MYB66/WER. In terms of tissue distribution, ubiquitous with higher levels in buds and flowers. Specifically localized in developing root hair cells. Expressed in epidermal root hair cells (trichoblasts) and moves to root hairless cells (atrichoblasts) by a cell-to-cell movement through plasmodesmata (at protein level).

It localises to the nucleus. Its function is as follows. Transcription activator, when associated with MYB75/PAP1, MYB90/PAP2 or TT2. Involved in epidermal cell fate specification. Negatively regulates stomata formation but promotes trichome formation. Together with MYB66/WER, promotes the formation of non-hair cells in root epidermis cells in the N position. Whereas together with CPC, promotes the formation of hair cells in root epidermis cells in the H position by inhibiting non-hair cell formation. Also seems to play a role in the activation of anthocyanin biosynthesis, probably together with MYB75/PAP1. Involved in seed mucilage production. Activates the transcription of GL2. This chain is Transcription factor EGL1 (BHLH2), found in Arabidopsis thaliana (Mouse-ear cress).